A 369-amino-acid polypeptide reads, in one-letter code: UDP-N-acetylglucosamine--N-acetylmuramyl-(pentapeptide) pyrophosphoryl-undecaprenol N-acetylglucosamine transferase (369 aa).

Residues 10 to 12 (TGG), Asn-124, Arg-166, Ser-196, and Gln-300 contribute to the UDP-N-acetyl-alpha-D-glucosamine site.

It belongs to the glycosyltransferase 28 family. MurG subfamily.

The protein resides in the cell membrane. The enzyme catalyses di-trans,octa-cis-undecaprenyl diphospho-N-acetyl-alpha-D-muramoyl-L-alanyl-D-glutamyl-meso-2,6-diaminopimeloyl-D-alanyl-D-alanine + UDP-N-acetyl-alpha-D-glucosamine = di-trans,octa-cis-undecaprenyl diphospho-[N-acetyl-alpha-D-glucosaminyl-(1-&gt;4)]-N-acetyl-alpha-D-muramoyl-L-alanyl-D-glutamyl-meso-2,6-diaminopimeloyl-D-alanyl-D-alanine + UDP + H(+). The protein operates within cell wall biogenesis; peptidoglycan biosynthesis. In terms of biological role, cell wall formation. Catalyzes the transfer of a GlcNAc subunit on undecaprenyl-pyrophosphoryl-MurNAc-pentapeptide (lipid intermediate I) to form undecaprenyl-pyrophosphoryl-MurNAc-(pentapeptide)GlcNAc (lipid intermediate II). The chain is UDP-N-acetylglucosamine--N-acetylmuramyl-(pentapeptide) pyrophosphoryl-undecaprenol N-acetylglucosamine transferase from Desulfitobacterium hafniense (strain Y51).